We begin with the raw amino-acid sequence, 136 residues long: Peptide methionine sulfoxide reductase MsrB (136 aa).

In terms of domain architecture, MsrB spans 6-128 (EVSLYKELTD…NSAALSFTDE (123 aa)). 4 residues coordinate Zn(2+): C45, C48, C94, and C97. Catalysis depends on C117, which acts as the Nucleophile.

The protein belongs to the MsrB Met sulfoxide reductase family. It depends on Zn(2+) as a cofactor.

It carries out the reaction L-methionyl-[protein] + [thioredoxin]-disulfide + H2O = L-methionyl-(R)-S-oxide-[protein] + [thioredoxin]-dithiol. The polypeptide is Peptide methionine sulfoxide reductase MsrB (Photorhabdus laumondii subsp. laumondii (strain DSM 15139 / CIP 105565 / TT01) (Photorhabdus luminescens subsp. laumondii)).